Here is a 248-residue protein sequence, read N- to C-terminus: 14-3-3 protein gamma-2 (248 aa).

This sequence belongs to the 14-3-3 family. In terms of assembly, homodimer, and heterodimer with other family members. Expressed in brain, gill, heart, intestine, kidney, liver, ovary, skeletal muscle, spleen and testis.

It localises to the cytoplasm. In terms of biological role, adapter protein implicated in the regulation of a large spectrum of both general and specialized signaling pathways. Binds to a large number of partners, usually by recognition of a phosphoserine or phosphothreonine motif. Binding generally results in the modulation of the activity of the binding partner. This is 14-3-3 protein gamma-2 from Oncorhynchus mykiss (Rainbow trout).